We begin with the raw amino-acid sequence, 236 residues long: GLIPR1-like protein 1 (236 aa).

The signal sequence occupies residues 1–27 (MALKKKLNFLWTLVLYLIASRLPKAFG). Residues 46 to 178 (LNIHNELRRK…FSAGLFVCNY (133 aa)) enclose the SCP domain. A glycan (N-linked (GlcNAc...) asparagine) is linked at Asn-126.

This sequence belongs to the CRISP family. As to quaternary structure, part of a oolemmal binding multimeric complex (IZUMO1 complex) composed at least of IZUMO1 and GLIPR1L1; the complex assemblage is influenced by the maturation status of the male germ cell. Interacts with IZUMO1. N-glycosylated. N-glycosylation decreases during the transit in the caput. In terms of tissue distribution, expressed in testis (at protein level). Little or no expression in other tissues tested.

The protein resides in the cytoplasmic vesicle. Its subcellular location is the secretory vesicle. It is found in the acrosome. The protein localises to the cell membrane. It localises to the membrane raft. The protein resides in the secreted. In terms of biological role, required for optimal fertilization at the stage of sperm-oocyte fusion, plays a role in optimizing acrosome function, the translocation of IZUMO1 during the acrosome reaction and the fertilization process. Component of epididymosomes, one type of membranous microvesicules which mediate the transfer of lipids and proteins to spermatozoa plasma membrane during epididymal maturation. Also component of the CD9-positive microvesicules found in the cauda region. The chain is GLIPR1-like protein 1 from Mus musculus (Mouse).